A 280-amino-acid polypeptide reads, in one-letter code: Tryptophan synthase alpha chain (280 aa).

Active-site proton acceptor residues include glutamate 50 and aspartate 61.

Belongs to the TrpA family. In terms of assembly, tetramer of two alpha and two beta chains.

The enzyme catalyses (1S,2R)-1-C-(indol-3-yl)glycerol 3-phosphate + L-serine = D-glyceraldehyde 3-phosphate + L-tryptophan + H2O. It functions in the pathway amino-acid biosynthesis; L-tryptophan biosynthesis; L-tryptophan from chorismate: step 5/5. Its function is as follows. The alpha subunit is responsible for the aldol cleavage of indoleglycerol phosphate to indole and glyceraldehyde 3-phosphate. This Methylorubrum extorquens (strain CM4 / NCIMB 13688) (Methylobacterium extorquens) protein is Tryptophan synthase alpha chain.